The sequence spans 757 residues: Kin of IRRE-like protein 1 (757 aa).

A signal peptide spans 1–16; it reads MLSLLVWILTLSDTFS. At 17 to 499 the chain is on the extracellular side; that stretch reads QGTQTRFSQE…REVLPVGIIA (483 aa). 5 Ig-like C2-type domains span residues 21–115, 120–216, 223–299, 308–387, and 392–488; these read TRFS…AKLT, PEDT…TSIE, PTVT…TNVS, PRIV…EVPL, and PPII…IQLE. C42 and C100 are oxidised to a cystine. Residues N46 and N140 are each glycosylated (N-linked (GlcNAc...) asparagine). Cystine bridges form between C143–C200 and C244–C287. N297 is a glycosylation site (N-linked (GlcNAc...) asparagine). A disulfide bond links C329 and C371. Residues 405 to 407 carry the Cell attachment site motif; the sequence is RGD. A disulfide bond links C413 and C472. An N-linked (GlcNAc...) asparagine glycan is attached at N471. A helical membrane pass occupies residues 500–520; the sequence is GATIGASILLIFFFIALVFFL. The Cytoplasmic segment spans residues 521–757; that stretch reads YRRRKGSRKD…RFQQRMQTHV (237 aa). At S574 the chain carries Phosphoserine. Y605 and Y606 each carry phosphotyrosine; by FYN. Residues Y622 and Y625 each carry the phosphotyrosine modification. Positions 649–679 are disordered; that stretch reads QLNTYSRGPASDYGPEPTPPGPAAPAGTDTT. Y724 carries the post-translational modification Phosphotyrosine.

The protein belongs to the immunoglobulin superfamily. As to quaternary structure, interacts with TJP1/ZO-1 and with NPHS2/podocin (via the C-terminus). Interacts with NPHS1/nephrin (via the Ig-like domains); this interaction is dependent on KIRREL1 glycosylation. Homodimer (via the Ig-like domains). Interacts when tyrosine-phosphorylated with GRB2. Post-translationally, phosphorylation probably regulates the interaction with NSH2. Phosphorylated at Tyr-605 and Tyr-606 by FYN, leading to GRB2 binding. In terms of processing, N-glycosylated. In terms of tissue distribution, abundantly expressed in kidney. Specifically expressed in podocytes of kidney glomeruli.

The protein resides in the cell membrane. In terms of biological role, required for proper function of the glomerular filtration barrier. It is involved in the maintenance of a stable podocyte architecture with interdigitating foot processes connected by specialized cell-cell junctions, known as the slit diaphragm. It is a signaling protein that needs the presence of TEC kinases to fully trans-activate the transcription factor AP-1. In Homo sapiens (Human), this protein is Kin of IRRE-like protein 1.